The following is a 604-amino-acid chain: BTB/POZ domain-containing protein SR1IP1 (604 aa).

The region spanning 27–96 (SDVTVHVGEA…CYGINFDMST (70 aa)) is the BTB domain. The region spanning 201–474 (DWWAEDLTVL…VQVLYYEQQR (274 aa)) is the NPH3 domain. At Y415 the chain carries Phosphotyrosine. Disordered regions lie at residues 478-499 (EVTN…VLPP) and 532-604 (FEKE…HSIS). Residues 500–541 (KLSSYTDELSKLKRENQDLKLELLKMKMKLKEFEKESEKKTS) are a coiled coil. A compositionally biased stretch (low complexity) spans 541–558 (SSSTISTNPSSPISTAST). Basic residues predominate over residues 591–604 (GRTKPPKDRRHSIS).

Belongs to the NPH3 family. Interacts with CAMTA3 and CUL3A.

Its pathway is protein modification; protein ubiquitination. In terms of biological role, acts as a substrate-specific adapter of an E3 ubiquitin-protein ligase complex (CUL3-RBX1-BTB) which mediates the ubiquitination and subsequent proteasomal degradation of target proteins. Involved in disease resistance. Acts as a substrate adapter that recruits CAMTA3/SR1 for ubiquitination and degradation during pathogen infection. Acts as a positive regulator of plant defense by removing the defense suppressor CAMTA3/SR1. In Arabidopsis thaliana (Mouse-ear cress), this protein is BTB/POZ domain-containing protein SR1IP1.